A 324-amino-acid chain; its full sequence is NAD(P)H-dependent D-xylose reductase XYR1 (324 aa).

Tyr50 (proton donor) is an active-site residue. Residue His112 participates in substrate binding. Residues 168-169 (SN), 217-226 (SSFGPASFKE), and 273-283 (KSSREKTMKSN) each bind NAD(+).

Belongs to the aldo/keto reductase family.

It catalyses the reaction xylitol + NAD(+) = D-xylose + NADH + H(+). The catalysed reaction is xylitol + NADP(+) = D-xylose + NADPH + H(+). The protein operates within carbohydrate metabolism; D-xylose degradation. Its function is as follows. Catalyzes the initial reaction in the xylose utilization pathway by reducing D-xylose into xylitol. Xylose is a major component of hemicelluloses such as xylan. Most fungi utilize D-xylose via three enzymatic reactions, xylose reductase (XR), xylitol dehydrogenase (XDH), and xylulokinase, to form xylulose 5-phosphate, which enters pentose phosphate pathway. This chain is NAD(P)H-dependent D-xylose reductase XYR1 (XYR1), found in Pyricularia oryzae (strain 70-15 / ATCC MYA-4617 / FGSC 8958) (Rice blast fungus).